Consider the following 362-residue polypeptide: S-adenosylmethionine-dependent nucleotide dehydratase RSAD2 (362 aa).

The tract at residues 47 to 73 (EQPQVRGEPEDTQETQEDGNSTQPTTP) is disordered. Residues 64 to 73 (DGNSTQPTTP) are compositionally biased toward polar residues. Residues 70 to 290 (PTTPVSVNYH…LERHKEVSCL (221 aa)) enclose the Radical SAM core domain. The [4Fe-4S] cluster site is built by cysteine 84, cysteine 88, and cysteine 91. Lysine 198 bears the N6-acetyllysine mark. Lysine 207 participates in a covalent cross-link: Glycyl lysine isopeptide (Lys-Gly) (interchain with G-Cter in ubiquitin).

This sequence belongs to the radical SAM superfamily. RSAD2 family. As to quaternary structure, homodimer. Interacts with IRAK1 and TRAF6. Interacts with FPPS. Interacts with HADHB. Interacts (via C-terminus) with VAPA/VAP33 (via C-terminus). [4Fe-4S] cluster is required as a cofactor. In terms of processing, acetylated by HAT1. HAT1-mediated acetylation of Lys-198 in turn recruits UBE4A that stimulates RSAD2 polyubiquitination leading to proteasomal degradation. 'Lys-6'-linked polyubiquitination at Lys-207 leads to RSAD2 protein degradation. As to expression, expressed at higher levels in atherosclerotic arteries than in normal arteries.

Its subcellular location is the endoplasmic reticulum membrane. It localises to the golgi apparatus. The protein localises to the endoplasmic reticulum. It is found in the lipid droplet. The protein resides in the mitochondrion. Its subcellular location is the mitochondrion inner membrane. It localises to the mitochondrion outer membrane. It catalyses the reaction CTP + AH2 + S-adenosyl-L-methionine = 3'-deoxy-3',4'-didehydro-CTP + 5'-deoxyadenosine + L-methionine + A + H2O + H(+). Its activity is regulated as follows. IRAK1 and TRAF6 synergistically activate RSAD2 increasing its activity with CTP as substrate about 10-fold. Its function is as follows. Interferon-inducible antiviral protein which plays a major role in the cell antiviral state induced by type I and type II interferon. Catalyzes the conversion of cytidine triphosphate (CTP) to 3'-deoxy-3',4'-didehydro-CTP (ddhCTP) via a SAM-dependent radical mechanism. In turn, ddhCTP acts as a chain terminator for the RNA-dependent RNA polymerases from multiple viruses and directly inhibits viral replication. Therefore, inhibits a wide range of DNA and RNA viruses. Also promotes TLR7 and TLR9-dependent production of IFN-beta production in plasmacytoid dendritic cells (pDCs) by facilitating 'Lys-63'-linked ubiquitination of IRAK1 by TRAF6. Plays a role in CD4+ T-cells activation and differentiation. Facilitates T-cell receptor (TCR)-mediated GATA3 activation and optimal T-helper 2 (Th2) cytokine production by modulating NFKB1 and JUNB activities. Can inhibit secretion of soluble proteins. In Mus musculus (Mouse), this protein is S-adenosylmethionine-dependent nucleotide dehydratase RSAD2.